Reading from the N-terminus, the 219-residue chain is 2,5-diamino-6-ribosylamino-4(3H)-pyrimidinone 5'-phosphate reductase (219 aa).

NADP(+)-binding positions include Thr-52, Asp-56, Ser-87–Arg-90, Val-134, and Gly-156–Leu-159.

Belongs to the HTP reductase family. As to quaternary structure, homodimer.

It carries out the reaction 2,5-diamino-6-(1-D-ribitylamino)pyrimidin-4(3H)-one 5'-phosphate + NADP(+) = 2,5-diamino-6-(1-D-ribosylamino)pyrimidin-4(3H)-one 5'-phosphate + NADPH + H(+). It catalyses the reaction 2,5-diamino-6-(1-D-ribitylamino)pyrimidin-4(3H)-one 5'-phosphate + NAD(+) = 2,5-diamino-6-(1-D-ribosylamino)pyrimidin-4(3H)-one 5'-phosphate + NADH + H(+). The protein operates within cofactor biosynthesis; riboflavin biosynthesis. Catalyzes an early step in riboflavin biosynthesis, the NADPH-dependent reduction of the ribose side chain of 2,5-diamino-6-ribosylamino-4(3H)-pyrimidinone 5'-phosphate, yielding 2,5-diamino-6-ribitylamino-4(3H)-pyrimidinone 5'-phosphate. The polypeptide is 2,5-diamino-6-ribosylamino-4(3H)-pyrimidinone 5'-phosphate reductase (Archaeoglobus fulgidus (strain ATCC 49558 / DSM 4304 / JCM 9628 / NBRC 100126 / VC-16)).